Consider the following 179-residue polypeptide: uncharacterized protein (179 aa).

This is an uncharacterized protein from Salmonella typhimurium (strain LT2 / SGSC1412 / ATCC 700720).